Here is a 146-residue protein sequence, read N- to C-terminus: Lysozyme-like protein 4 (146 aa).

A signal peptide spans 1–19 (MKASVVLSLLGYLVVPSGA). Residues 20–146 (YILGRCTVAK…LARWLDGCKL (127 aa)) enclose the C-type lysozyme domain. Disulfide bonds link Cys-25/Cys-144, Cys-49/Cys-131, Cys-84/Cys-96, and Cys-92/Cys-110. Glu-54 is a catalytic residue.

This sequence belongs to the glycosyl hydrolase 22 family. In terms of assembly, monomer. Expressed in testis and epididymis.

It localises to the secreted. The protein localises to the cytoplasmic vesicle. The protein resides in the secretory vesicle. Its subcellular location is the acrosome. It is found in the cell projection. It localises to the cilium. The protein localises to the flagellum. In terms of biological role, may be involved in fertilization. Has no detectable bacteriolytic and lysozyme activities in vitro. The sequence is that of Lysozyme-like protein 4 (LYZL4) from Homo sapiens (Human).